A 136-amino-acid polypeptide reads, in one-letter code: Small ribosomal subunit protein eS12 (136 aa).

This sequence belongs to the eukaryotic ribosomal protein eS12 family.

This Dictyostelium discoideum (Social amoeba) protein is Small ribosomal subunit protein eS12 (rps12).